Consider the following 148-residue polypeptide: Deoxyuridine 5'-triphosphate nucleotidohydrolase (148 aa).

Substrate-binding positions include Arg-68–Gly-70, Asn-81, Thr-85–Asp-87, and Lys-95.

Belongs to the dUTPase family. Requires Mg(2+) as cofactor.

It carries out the reaction dUTP + H2O = dUMP + diphosphate + H(+). Its pathway is pyrimidine metabolism; dUMP biosynthesis; dUMP from dCTP (dUTP route): step 2/2. In terms of biological role, this enzyme is involved in nucleotide metabolism: it produces dUMP, the immediate precursor of thymidine nucleotides and it decreases the intracellular concentration of dUTP so that uracil cannot be incorporated into DNA. In Rickettsia canadensis (strain McKiel), this protein is Deoxyuridine 5'-triphosphate nucleotidohydrolase.